The following is a 137-amino-acid chain: Proofreading thioesterase EntH (137 aa).

E63 acts as the Nucleophile or proton acceptor in catalysis.

This sequence belongs to the thioesterase PaaI family. As to quaternary structure, homotetramer. Dimer of dimers. Interacts specifically with the aryl carrier protein (ArCP) domain of EntB.

It localises to the cytoplasm. Its pathway is siderophore biosynthesis; enterobactin biosynthesis. Its function is as follows. Required for optimal enterobactin synthesis. Acts as a proofreading enzyme that prevents EntB misacylation by hydrolyzing the thioester bound existing between EntB and wrongly charged molecules. In Salmonella paratyphi B (strain ATCC BAA-1250 / SPB7), this protein is Proofreading thioesterase EntH.